The primary structure comprises 335 residues: Phospho-N-acetylmuramoyl-pentapeptide-transferase (335 aa).

Transmembrane regions (helical) follow at residues 3–23, 53–73, 78–98, 118–138, 143–163, 175–195, 200–220, 226–246, 251–271, and 314–334; these read LTLI…PHFI, GGTV…ILFF, SMGL…IGFL, LSLQ…PSGI, VFGF…FWVV, IDGL…VIAI, YDVL…FIFN, VFMG…ISIA, WTLL…MLQV, and VDAF…AILY.

Belongs to the glycosyltransferase 4 family. MraY subfamily. It depends on Mg(2+) as a cofactor.

The protein localises to the cell membrane. The catalysed reaction is UDP-N-acetyl-alpha-D-muramoyl-L-alanyl-gamma-D-glutamyl-L-lysyl-D-alanyl-D-alanine + di-trans,octa-cis-undecaprenyl phosphate = Mur2Ac(oyl-L-Ala-gamma-D-Glu-L-Lys-D-Ala-D-Ala)-di-trans,octa-cis-undecaprenyl diphosphate + UMP. The protein operates within cell wall biogenesis; peptidoglycan biosynthesis. In terms of biological role, catalyzes the initial step of the lipid cycle reactions in the biosynthesis of the cell wall peptidoglycan: transfers peptidoglycan precursor phospho-MurNAc-pentapeptide from UDP-MurNAc-pentapeptide onto the lipid carrier undecaprenyl phosphate, yielding undecaprenyl-pyrophosphoryl-MurNAc-pentapeptide, known as lipid I. This chain is Phospho-N-acetylmuramoyl-pentapeptide-transferase, found in Streptococcus uberis (strain ATCC BAA-854 / 0140J).